A 142-amino-acid chain; its full sequence is Hemoglobin subunit alpha (142 aa).

The Globin domain maps to 2–142 (VLSPADKTNV…VSTVLTSKYR (141 aa)). A Phosphoserine modification is found at S4. At K8 the chain carries N6-succinyllysine. T9 carries the phosphothreonine modification. N6-succinyllysine is present on K12. K17 is subject to N6-acetyllysine; alternate. K17 bears the N6-succinyllysine; alternate mark. Y25 carries the phosphotyrosine modification. S36 carries the phosphoserine modification. Residue K41 is modified to N6-succinyllysine. S50 carries the phosphoserine modification. H59 is an O2 binding site. Residue H88 participates in heme b binding. S103 is subject to Phosphoserine. Residue T109 is modified to Phosphothreonine. Position 125 is a phosphoserine (S125). 2 positions are modified to phosphothreonine: T135 and T138. S139 carries the post-translational modification Phosphoserine.

This sequence belongs to the globin family. In terms of assembly, heterotetramer of two alpha chains and two beta chains. As to expression, red blood cells.

Functionally, involved in oxygen transport from the lung to the various peripheral tissues. Its function is as follows. Hemopressin acts as an antagonist peptide of the cannabinoid receptor CNR1. Hemopressin-binding efficiently blocks cannabinoid receptor CNR1 and subsequent signaling. The polypeptide is Hemoglobin subunit alpha (HBA) (Ailurus fulgens (Himalayan red panda)).